A 314-amino-acid polypeptide reads, in one-letter code: Oxaloacetate tautomerase FAHD2B, mitochondrial (314 aa).

Residues 1-84 (MLGSSGRRLL…ATLSVVRRAL (84 aa)) constitute a mitochondrion transit peptide. Positions 159, 161, and 190 each coordinate Mg(2+). Lysine 203 bears the N6-acetyllysine; alternate mark. Position 203 is an N6-succinyllysine; alternate (lysine 203). Lysine 234 carries the post-translational modification N6-acetyllysine.

Belongs to the FAH family. Mg(2+) is required as a cofactor. It depends on Mn(2+) as a cofactor.

The protein resides in the mitochondrion. It catalyses the reaction oxaloacetate = enol-oxaloacetate. Its function is as follows. Tautomerase that converts enol-oxaloacetate, a strong inhibitor of succinate dehydrogenase, to the physiological keto form of oxaloacetate. It is thereby required to maximize aerobic respiration efficiency by preventing succinate dehydrogenase inhibition. The protein is Oxaloacetate tautomerase FAHD2B, mitochondrial of Bos taurus (Bovine).